A 71-amino-acid polypeptide reads, in one-letter code: Large ribosomal subunit protein bL31 (71 aa).

Residues Cys-16, Cys-18, Cys-37, and Cys-40 each coordinate Zn(2+).

This sequence belongs to the bacterial ribosomal protein bL31 family. Type A subfamily. As to quaternary structure, part of the 50S ribosomal subunit. Zn(2+) is required as a cofactor.

Binds the 23S rRNA. This Nitratidesulfovibrio vulgaris (strain DSM 19637 / Miyazaki F) (Desulfovibrio vulgaris) protein is Large ribosomal subunit protein bL31.